A 147-amino-acid polypeptide reads, in one-letter code: Large ribosomal subunit protein uL15 (147 aa).

The interval 1–57 (MRLEDLRPTPGSMKKRKRVGRGPGSGHGKTSGRGHKGQKARGTGKVHPWFEGGQTPL) is disordered. A compositionally biased stretch (basic residues) spans 30–44 (TSGRGHKGQKARGTG).

It belongs to the universal ribosomal protein uL15 family. As to quaternary structure, part of the 50S ribosomal subunit.

Its function is as follows. Binds to the 23S rRNA. The protein is Large ribosomal subunit protein uL15 of Thermotoga neapolitana (strain ATCC 49049 / DSM 4359 / NBRC 107923 / NS-E).